A 329-amino-acid polypeptide reads, in one-letter code: Peroxidase 50 (329 aa).

The first 25 residues, M1–A25, serve as a signal peptide directing secretion. 4 disulfide bridges follow: C36-C119, C69-C74, C125-C325, and C204-C236. H67 acts as the Proton acceptor in catalysis. 5 residues coordinate Ca(2+): D68, V71, G73, D75, and S77. P167 is a substrate binding site. H197 lines the heme b pocket. T198 provides a ligand contact to Ca(2+). Residue N215 is glycosylated (N-linked (GlcNAc...) asparagine). Ca(2+) is bound by residues D249, T252, and D257.

Belongs to the peroxidase family. Classical plant (class III) peroxidase subfamily. Requires heme b as cofactor. Ca(2+) is required as a cofactor. Expressed in roots and leaves.

Its subcellular location is the secreted. The catalysed reaction is 2 a phenolic donor + H2O2 = 2 a phenolic radical donor + 2 H2O. In terms of biological role, removal of H(2)O(2), oxidation of toxic reductants, biosynthesis and degradation of lignin, suberization, auxin catabolism, response to environmental stresses such as wounding, pathogen attack and oxidative stress. These functions might be dependent on each isozyme/isoform in each plant tissue. Its function is as follows. Exhibits a Ca(2+)-pectate binding affinity which could be interpreted in vivo as a specificity to interact with the pectic structure of the cell wall. The chain is Peroxidase 50 (PER50) from Arabidopsis thaliana (Mouse-ear cress).